We begin with the raw amino-acid sequence, 522 residues long: 2-isopropylmalate synthase (522 aa).

Residues 5 to 267 enclose the Pyruvate carboxyltransferase domain; that stretch reads VIIFDTTLRD…ETGINAKEIH (263 aa). The Mn(2+) site is built by Asp-14, His-202, His-204, and Asn-238. The segment at 392–522 is regulatory domain; it reads QLRQLVVQSD…MHKNRELGGV (131 aa).

It belongs to the alpha-IPM synthase/homocitrate synthase family. LeuA type 1 subfamily. As to quaternary structure, homodimer. Mn(2+) serves as cofactor.

The protein resides in the cytoplasm. It carries out the reaction 3-methyl-2-oxobutanoate + acetyl-CoA + H2O = (2S)-2-isopropylmalate + CoA + H(+). It participates in amino-acid biosynthesis; L-leucine biosynthesis; L-leucine from 3-methyl-2-oxobutanoate: step 1/4. Functionally, catalyzes the condensation of the acetyl group of acetyl-CoA with 3-methyl-2-oxobutanoate (2-ketoisovalerate) to form 3-carboxy-3-hydroxy-4-methylpentanoate (2-isopropylmalate). The sequence is that of 2-isopropylmalate synthase from Shewanella oneidensis (strain ATCC 700550 / JCM 31522 / CIP 106686 / LMG 19005 / NCIMB 14063 / MR-1).